The sequence spans 537 residues: Membrane protein insertase YidC (537 aa).

A run of 5 helical transmembrane segments spans residues Ser-6–Asp-26, Leu-341–Leu-363, Leu-411–Phe-431, Leu-449–Leu-469, and Pro-490–Val-510.

The protein belongs to the OXA1/ALB3/YidC family. Type 1 subfamily. As to quaternary structure, interacts with the Sec translocase complex via SecD. Specifically interacts with transmembrane segments of nascent integral membrane proteins during membrane integration.

The protein resides in the cell inner membrane. Functionally, required for the insertion and/or proper folding and/or complex formation of integral membrane proteins into the membrane. Involved in integration of membrane proteins that insert both dependently and independently of the Sec translocase complex, as well as at least some lipoproteins. Aids folding of multispanning membrane proteins. The chain is Membrane protein insertase YidC from Actinobacillus succinogenes (strain ATCC 55618 / DSM 22257 / CCUG 43843 / 130Z).